A 303-amino-acid polypeptide reads, in one-letter code: Serine/threonine-protein phosphatase 6 catalytic subunit (303 aa).

Mn(2+) contacts are provided by Asp51, His53, Asp79, and Asn111. Residue His112 is the Proton donor of the active site. His161 and His235 together coordinate Mn(2+).

This sequence belongs to the PPP phosphatase family. PP-6 (PP-V) subfamily. Mn(2+) serves as cofactor.

The protein localises to the cytoplasm. The enzyme catalyses O-phospho-L-seryl-[protein] + H2O = L-seryl-[protein] + phosphate. It carries out the reaction O-phospho-L-threonyl-[protein] + H2O = L-threonyl-[protein] + phosphate. Functionally, may be involved in controlling cellularization or in regulating transcription of the genes involved in this process. In Drosophila melanogaster (Fruit fly), this protein is Serine/threonine-protein phosphatase 6 catalytic subunit (PpV).